The primary structure comprises 434 residues: Enolase (434 aa).

Residue glutamine 163 participates in (2R)-2-phosphoglycerate binding. Catalysis depends on glutamate 205, which acts as the Proton donor. Positions 242, 289, and 316 each coordinate Mg(2+). Lysine 341, arginine 370, serine 371, and lysine 392 together coordinate (2R)-2-phosphoglycerate. The Proton acceptor role is filled by lysine 341.

It belongs to the enolase family. Mg(2+) serves as cofactor.

It is found in the cytoplasm. It localises to the secreted. The protein resides in the cell surface. It catalyses the reaction (2R)-2-phosphoglycerate = phosphoenolpyruvate + H2O. Its pathway is carbohydrate degradation; glycolysis; pyruvate from D-glyceraldehyde 3-phosphate: step 4/5. Functionally, catalyzes the reversible conversion of 2-phosphoglycerate (2-PG) into phosphoenolpyruvate (PEP). It is essential for the degradation of carbohydrates via glycolysis. The protein is Enolase of Lacticaseibacillus casei (strain BL23) (Lactobacillus casei).